The primary structure comprises 321 residues: Lipoyl synthase (321 aa).

7 residues coordinate [4Fe-4S] cluster: Cys-60, Cys-65, Cys-71, Cys-86, Cys-90, Cys-93, and Ser-299. One can recognise a Radical SAM core domain in the interval 72-288 (WEKKHATFMI…ETIGRTKGFL (217 aa)).

It belongs to the radical SAM superfamily. Lipoyl synthase family. It depends on [4Fe-4S] cluster as a cofactor.

It is found in the cytoplasm. The catalysed reaction is [[Fe-S] cluster scaffold protein carrying a second [4Fe-4S](2+) cluster] + N(6)-octanoyl-L-lysyl-[protein] + 2 oxidized [2Fe-2S]-[ferredoxin] + 2 S-adenosyl-L-methionine + 4 H(+) = [[Fe-S] cluster scaffold protein] + N(6)-[(R)-dihydrolipoyl]-L-lysyl-[protein] + 4 Fe(3+) + 2 hydrogen sulfide + 2 5'-deoxyadenosine + 2 L-methionine + 2 reduced [2Fe-2S]-[ferredoxin]. It participates in protein modification; protein lipoylation via endogenous pathway; protein N(6)-(lipoyl)lysine from octanoyl-[acyl-carrier-protein]: step 2/2. In terms of biological role, catalyzes the radical-mediated insertion of two sulfur atoms into the C-6 and C-8 positions of the octanoyl moiety bound to the lipoyl domains of lipoate-dependent enzymes, thereby converting the octanoylated domains into lipoylated derivatives. In Brucella anthropi (strain ATCC 49188 / DSM 6882 / CCUG 24695 / JCM 21032 / LMG 3331 / NBRC 15819 / NCTC 12168 / Alc 37) (Ochrobactrum anthropi), this protein is Lipoyl synthase.